The primary structure comprises 962 residues: Synphilin-1 (962 aa).

Disordered regions lie at residues 80–99 (SPLK…DQKN), 104–137 (YQKG…EPSQ), and 222–249 (TALR…PAYE). 4 ANK repeats span residues 348–379 (NGNN…CLNE), 383–412 (EQLT…AIAE), 418–447 (DFPS…EQGI), and 455–484 (EGNS…NVTM). Residues 522-548 (VKLTKQLKEQTVERVTLQSQLQQLLEA) are a coiled coil. The interval 548–590 (AQKSEGKSLPSSPSSPSSPASTKSQWKALDTDEESTGKSKVGA) is disordered. The span at 554–571 (KSLPSSPSSPSSPASTKS) shows a compositional bias: low complexity. The ANK 5 repeat unit spans residues 602 to 631 (VSSRARTKGKDEDSDKILRQLLGKEISENV). The segment covering 667 to 684 (RQLMQRSLSESDTDSNNS) has biased composition (low complexity). The segment at 667-852 (RQLMQRSLSE…QRTSESGEQM (186 aa)) is disordered. Positions 685-699 (EDPKNTPVKRADRPR) are enriched in basic and acidic residues. The ANK 6 repeat unit spans residues 698-728 (PRPQPIVESVENVDSAESLHLMIKKHSLASG). A compositionally biased stretch (polar residues) spans 772 to 790 (PSTEATQSSPDSTAAQKVA). The segment covering 831–840 (NGEKDKDKGR) has biased composition (basic and acidic residues).

Associates with SNCA, RNF19A and PRKN. Post-translationally, ubiquitinated; mediated by SIAH1 or RNF19A and leading to its subsequent proteasomal degradation.

This is Synphilin-1 (Sncaip) from Mus musculus (Mouse).